Consider the following 502-residue polypeptide: UPF0371 protein CLM_0396 (502 aa).

It belongs to the UPF0371 family.

This chain is UPF0371 protein CLM_0396, found in Clostridium botulinum (strain Kyoto / Type A2).